Reading from the N-terminus, the 338-residue chain is ABC transporter I family member 6, chloroplastic (338 aa).

Residues 1–66 (MAGVNLQLRH…RTTRRSVIVS (66 aa)) constitute a chloroplast transit peptide. In terms of domain architecture, ABC transporter spans 92–338 (LEVRDLRAVI…EKEGYKAISG (247 aa)). 126–133 (GKNGSGKS) contributes to the ATP binding site.

The protein belongs to the ABC transporter superfamily. ABCI family. As to quaternary structure, interacts with NAP6. As to expression, present in all organs, with higher levels in aerial parts.

It localises to the plastid. Its subcellular location is the chloroplast. Its function is as follows. Essential protein. Required during embryo development, especially at early stages. Involved in chloroplast differentiation. In Arabidopsis thaliana (Mouse-ear cress), this protein is ABC transporter I family member 6, chloroplastic (ABCI6).